The sequence spans 1313 residues: MNDRISEVSGSSRARRSVLSYGTTETGSDRYTENSNIATENGVDTASSMIDGIQSGFPQPRHGFEEEYNNAEYINMLEQVFYMYYTDKRHRGVISKKNAEPTETIHDWRMRERLKTVSAALLVCLNIGVDPPDVIKPNPAAKYECWIDPFSLPASKALEAIGKNLQQQYETLSMRTRYRHYLDPAIEEVKKLCIGQRRNAKEERILFHYNGHGVPMPTASGEIWVFNKNYTQYIPVSLYDLQSWLGAPCIYVYDCSAAGNIIVNFNRFAEQRDKEALRIAKQNPNVLAMPSHTSCIQLAACGPKETLPMNPDLPADLFTSCLTSPIEISVRWYVLQNPFPNKLNLNMLLKIPGRLQDRRTPLGELNWIFTAITDTIAWNVFPKHLFRRLFRQDLMVAALFRNFLLAERIMLVHSCHPQSSPELPPTHDHPMWNSWDLAIDNCLSQLPDMLDAESKGIAYEYKHSTFFSEQLTAFEVWLSQGLISRKPPDQLPLVLQVLLSQVHRLRALILLSKFLDLGVWAVDLALSIGIFPYVLKLLQSPAIELKPVLVFIWARILAVDDSCQADLLKDNGYGYFVQILNPNSSIFPSSNISEHRAMCAFILSVFCRGFPQGQLACLNPQVLSHCLSHLNSPDSLLRQWACLCISQLWENYSEAKWSGTRDNAHVKLAEIIVDSVPEVRASVLTAFTTFLGFPEKTEEVVAVETYIAIAALAALSDASPLVRHELVIFLSHFVVNYKKQLMVVAYESSLADILEKKNHNSISASTIYETVWQAVLVLAADPSIEISLAAEAIINYVYQSMLNSELRESFLAFLLQHLPALHKASLSKDTDTNSVTSDPKPHPFVPSVSENKILNRSFSLTRSLKGLALSLAGSDRASELLSLNGENKPAESNLNHLTSAKVPGPPAFNELEYQSELDMPLTSYLFDWSRKYFTEPQMRPNEDDEPGSICYNQRLWRRNRNEKLIYRTRPLAEYSTNGRWNQQLMTFNNTIAPRKLMFHQFEDQLITLGDKDIIQVWDWRRNRCLNSFKTSASATTNVTDMQLLNEDDVALLMTGSSDGTIKLYRDYENEKVELVTSWNSLSDLVFGDRNASLLMSWQQNCGHLLVAGDVRVIRIWDASKEICYANLPVRSSNSITSLTSDLVGCNIIVAGFSDGVLRVYDKRLPARDSLTDVWKEHSSEIVNVEMQSSGMRELISASSDGEVKLWDIRMNHSLQTFSTDNSGLTSLTVHSHAPVYATGSSNQSIKIWDTLGQNINTFRENPRFLNQPKPSSLMCLKFHPHHLLLACGDNTDSRVNLYSCTKNEIHTDSPNEF.

Residues Met1–Ser35 are disordered. Phosphoserine is present on residues Ser834, Ser837, and Ser882. WD repeat units follow at residues Thr986–Lys1029, Ser1033–Leu1074, Gly1087–Asn1126, Arg1130–Leu1170, Glu1176–Thr1216, Thr1219–Arg1259, and Pro1268–Asp1308.

It belongs to the WD repeat RAPTOR family. The target of rapamycin complex 1 (TORC1) is composed of at least mip1, pop3/wat1, tco89, toc1 and tor2.

Its subcellular location is the cytoplasm. Functionally, component of TORC1, which regulates multiple cellular processes to control cell growth in response to environmental signals. Tor2 is essential for growth. Nutrient limitation and environmental stress signals cause inactivation of TORC1. Active TORC1 positively controls cell growth and ribosome biogenesis by regulating ribosomal protein gene expression. TORC1 negatively controls G1 cell-cycle arrest, sexual development and amino acid uptake. Represses mating, meiosis and sporulation efficiency by interfering with the functions of the transcription factor ste11 and the meiosis-promoting RNA-binding protein mei2. The polypeptide is Target of rapamycin complex 1 subunit mip1 (Schizosaccharomyces pombe (strain 972 / ATCC 24843) (Fission yeast)).